The chain runs to 309 residues: Probable manganese-dependent inorganic pyrophosphatase (309 aa).

H9, D13, D15, D75, H97, and D149 together coordinate Mn(2+).

It belongs to the PPase class C family. Mn(2+) serves as cofactor.

The protein localises to the cytoplasm. It carries out the reaction diphosphate + H2O = 2 phosphate + H(+). This is Probable manganese-dependent inorganic pyrophosphatase from Staphylococcus haemolyticus (strain JCSC1435).